A 76-amino-acid polypeptide reads, in one-letter code: Small ribosomal subunit protein bS18 (76 aa).

This sequence belongs to the bacterial ribosomal protein bS18 family. As to quaternary structure, part of the 30S ribosomal subunit. Forms a tight heterodimer with protein bS6.

Its function is as follows. Binds as a heterodimer with protein bS6 to the central domain of the 16S rRNA, where it helps stabilize the platform of the 30S subunit. In Desulfitobacterium hafniense (strain Y51), this protein is Small ribosomal subunit protein bS18.